A 144-amino-acid chain; its full sequence is Eukaryotic translation initiation factor 1A (144 aa).

The segment covering 1 to 15 (MPKNKGKGGKNRKRG) has biased composition (basic residues). Disordered stretches follow at residues 1–25 (MPKNKGKGGKNRKRGKNEADDDKRE) and 120–144 (DVDGPEEGEGDSDYIQFEDEDIDKI). The segment covering 16 to 25 (KNEADDDKRE) has biased composition (basic and acidic residues). The S1-like domain maps to 22–96 (DKRELVFKED…DKADVILKYM (75 aa)).

This sequence belongs to the eIF-1A family.

In terms of biological role, seems to be required for maximal rate of protein biosynthesis. Enhances ribosome dissociation into subunits and stabilizes the binding of the initiator Met-tRNA(I) to 40 S ribosomal subunits. The chain is Eukaryotic translation initiation factor 1A from Triticum aestivum (Wheat).